The primary structure comprises 295 residues: Bifunctional protein FolD (295 aa).

Residues 166-168, Ser191, and Ile232 contribute to the NADP(+) site; that span reads GRS.

This sequence belongs to the tetrahydrofolate dehydrogenase/cyclohydrolase family. In terms of assembly, homodimer.

It carries out the reaction (6R)-5,10-methylene-5,6,7,8-tetrahydrofolate + NADP(+) = (6R)-5,10-methenyltetrahydrofolate + NADPH. The catalysed reaction is (6R)-5,10-methenyltetrahydrofolate + H2O = (6R)-10-formyltetrahydrofolate + H(+). It functions in the pathway one-carbon metabolism; tetrahydrofolate interconversion. Catalyzes the oxidation of 5,10-methylenetetrahydrofolate to 5,10-methenyltetrahydrofolate and then the hydrolysis of 5,10-methenyltetrahydrofolate to 10-formyltetrahydrofolate. The polypeptide is Bifunctional protein FolD (Wolbachia pipientis subsp. Culex pipiens (strain wPip)).